The following is a 266-amino-acid chain: Beta-lactamase OXA-11 (266 aa).

The signal sequence occupies residues 1–20 (MKTFAAYVIIACLSSTALAG). The active-site Acyl-ester intermediate is the serine 67. Lysine 70 bears the N6-carboxylysine mark. 205 to 207 (KTG) contributes to the substrate binding site.

The protein belongs to the class-D beta-lactamase family.

It catalyses the reaction a beta-lactam + H2O = a substituted beta-amino acid. In terms of biological role, hydrolyzes carbenicillin, oxacillin and cephalosporin. Does not hydrolyze cefoxitin or carbapenems. The protein is Beta-lactamase OXA-11 (bla) of Pseudomonas aeruginosa.